Reading from the N-terminus, the 793-residue chain is Phenylalanine--tRNA ligase beta subunit (793 aa).

A tRNA-binding domain is found at 39–148; the sequence is AKPFTGVVVG…EDAPVGLNIR (110 aa). One can recognise a B5 domain in the interval 400–476; that stretch reads PKREAIELNQ…RIHGYDNIQI (77 aa). Residues Asp454, Asp460, Glu463, and Glu464 each contribute to the Mg(2+) site. In terms of domain architecture, FDX-ACB spans 698–791; sequence SRFPSVRRDI…LENTYQATLR (94 aa).

Belongs to the phenylalanyl-tRNA synthetase beta subunit family. Type 1 subfamily. Tetramer of two alpha and two beta subunits. Requires Mg(2+) as cofactor.

The protein localises to the cytoplasm. It carries out the reaction tRNA(Phe) + L-phenylalanine + ATP = L-phenylalanyl-tRNA(Phe) + AMP + diphosphate + H(+). The sequence is that of Phenylalanine--tRNA ligase beta subunit from Acinetobacter baylyi (strain ATCC 33305 / BD413 / ADP1).